Consider the following 475-residue polypeptide: Bifunctional protein HldE (475 aa).

Residues 1 to 318 form a ribokinase region; the sequence is MIQYSSKFNN…ENAIHHREET (318 aa). 195–198 provides a ligand contact to ATP; sequence NMSE. Residue Asp-264 is part of the active site. The segment at 344–475 is cytidylyltransferase; it reads MTNGCFDILH…NVIKKIQASK (132 aa).

It in the N-terminal section; belongs to the carbohydrate kinase PfkB family. In the C-terminal section; belongs to the cytidylyltransferase family. As to quaternary structure, homodimer.

The enzyme catalyses D-glycero-beta-D-manno-heptose 7-phosphate + ATP = D-glycero-beta-D-manno-heptose 1,7-bisphosphate + ADP + H(+). The catalysed reaction is D-glycero-beta-D-manno-heptose 1-phosphate + ATP + H(+) = ADP-D-glycero-beta-D-manno-heptose + diphosphate. The protein operates within nucleotide-sugar biosynthesis; ADP-L-glycero-beta-D-manno-heptose biosynthesis; ADP-L-glycero-beta-D-manno-heptose from D-glycero-beta-D-manno-heptose 7-phosphate: step 1/4. It functions in the pathway nucleotide-sugar biosynthesis; ADP-L-glycero-beta-D-manno-heptose biosynthesis; ADP-L-glycero-beta-D-manno-heptose from D-glycero-beta-D-manno-heptose 7-phosphate: step 3/4. It participates in bacterial outer membrane biogenesis; LPS core biosynthesis. Its function is as follows. Catalyzes the phosphorylation of D-glycero-D-manno-heptose 7-phosphate at the C-1 position to selectively form D-glycero-beta-D-manno-heptose-1,7-bisphosphate. In terms of biological role, catalyzes the ADP transfer from ATP to D-glycero-beta-D-manno-heptose 1-phosphate, yielding ADP-D-glycero-beta-D-manno-heptose. This chain is Bifunctional protein HldE (hldE), found in Actinobacillus pleuropneumoniae (Haemophilus pleuropneumoniae).